Consider the following 187-residue polypeptide: ATP synthase subunit b 2 (187 aa).

Polar residues predominate over residues 1–13; the sequence is MAESHATGTTTHT. The disordered stretch occupies residues 1–21; the sequence is MAESHATGTTTHTEVPHGKPE. A helical transmembrane segment spans residues 31–53; the sequence is ASQLVSFAIAFALLYVIVSRFAL.

Belongs to the ATPase B chain family. In terms of assembly, F-type ATPases have 2 components, F(1) - the catalytic core - and F(0) - the membrane proton channel. F(1) has five subunits: alpha(3), beta(3), gamma(1), delta(1), epsilon(1). F(0) has three main subunits: a(1), b(2) and c(10-14). The alpha and beta chains form an alternating ring which encloses part of the gamma chain. F(1) is attached to F(0) by a central stalk formed by the gamma and epsilon chains, while a peripheral stalk is formed by the delta and b chains.

Its subcellular location is the cell inner membrane. In terms of biological role, f(1)F(0) ATP synthase produces ATP from ADP in the presence of a proton or sodium gradient. F-type ATPases consist of two structural domains, F(1) containing the extramembraneous catalytic core and F(0) containing the membrane proton channel, linked together by a central stalk and a peripheral stalk. During catalysis, ATP synthesis in the catalytic domain of F(1) is coupled via a rotary mechanism of the central stalk subunits to proton translocation. Its function is as follows. Component of the F(0) channel, it forms part of the peripheral stalk, linking F(1) to F(0). The b'-subunit is a diverged and duplicated form of b found in plants and photosynthetic bacteria. The polypeptide is ATP synthase subunit b 2 (atpF2) (Afipia carboxidovorans (strain ATCC 49405 / DSM 1227 / KCTC 32145 / OM5) (Oligotropha carboxidovorans)).